The following is a 537-amino-acid chain: Ribonuclease Y (537 aa).

Residues 4-24 traverse the membrane as a helical segment; the sequence is FPIIMSVFAAIIGLVIGYVSV. The disordered stretch occupies residues 112–148; sequence ASTLDRKDDNLSNKEKALEQKEQSLSDKSKHIDAREE. A KH domain is found at 227-287; sequence TNSTVHLPDD…IRREIARMTM (61 aa). The 94-residue stretch at 353–446 folds into the HD domain; the sequence is VLRHSIEVAK…VAAADALSAA (94 aa).

This sequence belongs to the RNase Y family.

The protein localises to the cell membrane. In terms of biological role, endoribonuclease that initiates mRNA decay. This is Ribonuclease Y from Streptococcus sanguinis (strain SK36).